The sequence spans 341 residues: Holliday junction branch migration complex subunit RuvB (341 aa).

The segment at 1-21 (MSQPDPMLRPEPLESDGEDRA) is disordered. The segment at 4–183 (PDPMLRPEPL…FGIPTRLQFY (180 aa)) is large ATPase domain (RuvB-L). ATP-binding positions include Leu22, Arg23, Gly64, Lys67, Thr68, Thr69, 130 to 132 (EDF), Arg173, Tyr183, and Arg220. A Mg(2+)-binding site is contributed by Thr68. The interval 184 to 254 (TIEELDLIVT…IADSALTRLG (71 aa)) is small ATPAse domain (RuvB-S). The head domain (RuvB-H) stretch occupies residues 257–341 (HLGLDTADRR…PRTQESLFDE (85 aa)). DNA-binding residues include Arg293, Arg312, and Arg317.

This sequence belongs to the RuvB family. In terms of assembly, homohexamer. Forms an RuvA(8)-RuvB(12)-Holliday junction (HJ) complex. HJ DNA is sandwiched between 2 RuvA tetramers; dsDNA enters through RuvA and exits via RuvB. An RuvB hexamer assembles on each DNA strand where it exits the tetramer. Each RuvB hexamer is contacted by two RuvA subunits (via domain III) on 2 adjacent RuvB subunits; this complex drives branch migration. In the full resolvosome a probable DNA-RuvA(4)-RuvB(12)-RuvC(2) complex forms which resolves the HJ.

Its subcellular location is the cytoplasm. The enzyme catalyses ATP + H2O = ADP + phosphate + H(+). Its function is as follows. The RuvA-RuvB-RuvC complex processes Holliday junction (HJ) DNA during genetic recombination and DNA repair, while the RuvA-RuvB complex plays an important role in the rescue of blocked DNA replication forks via replication fork reversal (RFR). RuvA specifically binds to HJ cruciform DNA, conferring on it an open structure. The RuvB hexamer acts as an ATP-dependent pump, pulling dsDNA into and through the RuvAB complex. RuvB forms 2 homohexamers on either side of HJ DNA bound by 1 or 2 RuvA tetramers; 4 subunits per hexamer contact DNA at a time. Coordinated motions by a converter formed by DNA-disengaged RuvB subunits stimulates ATP hydrolysis and nucleotide exchange. Immobilization of the converter enables RuvB to convert the ATP-contained energy into a lever motion, pulling 2 nucleotides of DNA out of the RuvA tetramer per ATP hydrolyzed, thus driving DNA branch migration. The RuvB motors rotate together with the DNA substrate, which together with the progressing nucleotide cycle form the mechanistic basis for DNA recombination by continuous HJ branch migration. Branch migration allows RuvC to scan DNA until it finds its consensus sequence, where it cleaves and resolves cruciform DNA. This chain is Holliday junction branch migration complex subunit RuvB, found in Paracoccus denitrificans (strain Pd 1222).